Reading from the N-terminus, the 99-residue chain is MKMENLISMFCFSSKGSSKRRTKGSSTWFPQPDQHITIRTFRRLKAHQMLSHTWTKTETSLTMEVSKSMADQLEEVNSLPTTLMPRHSIVDPSYRPSIY.

This sequence belongs to the geminiviridae protein AC4/C4 family.

Pathogenicity determinant. May act as a suppressor of RNA-mediated gene silencing, also known as post-transcriptional gene silencing (PTGS), a mechanism of plant viral defense that limits the accumulation of viral RNAs. This Glycine max (Soybean) protein is Protein AC4.